The chain runs to 356 residues: Malate dehydrogenase, glyoxysomal (356 aa).

A glyoxysome-targeting transit peptide spans 1–36; that stretch reads MQPIPDVNQRIARISAHLHPPKSQMEESSALRRANC. Residues 51-57 and aspartate 77 contribute to the NAD(+) site; that span reads GAAGGIG. The substrate site is built by arginine 124 and arginine 130. NAD(+) contacts are provided by residues asparagine 137 and 160-162; that span reads ISN. Residues asparagine 162 and arginine 196 each contribute to the substrate site. Histidine 220 functions as the Proton acceptor in the catalytic mechanism. Position 271 (methionine 271) interacts with NAD(+).

It belongs to the LDH/MDH superfamily. MDH type 1 family. In terms of assembly, homodimer.

It is found in the glyoxysome. It carries out the reaction (S)-malate + NAD(+) = oxaloacetate + NADH + H(+). The protein is Malate dehydrogenase, glyoxysomal of Citrullus lanatus (Watermelon).